Consider the following 313-residue polypeptide: Leucine-rich repeat-containing protein 52 (313 aa).

The first 23 residues, 1 to 23 (MSLASGPGPGWLLFSFGMGLVSG), serve as a signal peptide directing secretion. In terms of domain architecture, LRRNT spans 24-53 (SKCPNNCLCQAQEVICTGKQLTEYPLDIPL). Residues 24–244 (SKCPNNCLCQ…MCITHLDHKD (221 aa)) are Extracellular-facing. 2 cysteine pairs are disulfide-bonded: Cys26/Cys32 and Cys30/Cys39. LRR repeat units follow at residues 54–75 (NTRR…HLGL), 78–99 (DLVY…TFIG), 102–123 (KLIY…TFSV), 126–148 (NLVQ…TFAN), and 151–172 (SLRY…ALYH). N-linked (GlcNAc...) asparagine glycosylation is found at Asn112 and Asn148. Residues 184–238 (NPWKCNCSFLDFAIFLIVFHMDPSDDLNATCVEPTELTGWPITRVGNPLRYMCIT) form the LRRCT domain. Intrachain disulfides connect Cys188-Cys214 and Cys190-Cys236. Residues Asn189 and Asn211 are each glycosylated (N-linked (GlcNAc...) asparagine). A helical transmembrane segment spans residues 245-265 (YIFLLLIGFCIFAAGTVAAWL). Residues 266–313 (TGVCAVLYQNTRHKSSEEDEDEAGTRVEVSRRIFQTQTSSVQEFPQLI) lie on the Cytoplasmic side of the membrane.

May interact with KCNU1; this interaction may be required for LRRC52 stability and may change the channel gating properties. Interacts with KCNMA1. Post-translationally, N-glycosylated. Mainly expressed in testis and skeletal muscle.

Its subcellular location is the cell membrane. In terms of biological role, auxiliary protein of the large-conductance, voltage and calcium-activated potassium channel (BK alpha). Modulates gating properties by producing a marked shift in the BK channel's voltage dependence of activation in the hyperpolarizing direction, and in the absence of calcium. KCNU1 channel auxiliary protein. Modulates KCNU1 gating properties. This chain is Leucine-rich repeat-containing protein 52 (LRRC52), found in Homo sapiens (Human).